Here is a 381-residue protein sequence, read N- to C-terminus: MESIGIVAPHKMHFTEPLQLQNGSSLAGYDLMVETYGTLNAARSNAVLVCHALNASHHVAGVYADNPKDIGWWDNMVGPGKPLDTDKFFVIGVNNLGSCFGSTGPMSIDPATGNPYGAAFPVVTVEDWVNAQARVADQFGITRFAAVMGGSLGGMQALAWSMMYPERVGHCIVVASTPKLSAQNIAFNEVARSAILSDPDFHGGNYYAHNVKPKRGLRVARMIGHITYLSDDDMAEKFGRSLRRAEGAVDAYNFNFDVEFEVESYLRYQGDKFADYFDANTYLLITRALDYFDPAKAFDGDLTAAVAHTTAKYLIASFSTDWRFAPARSRELVKALLDHKRTVTYAEIDAPHGHDAFLLDDARYHNLMRAYYERIANEVNA.

Residues 45–360 (NAVLVCHALN…PHGHDAFLLD (316 aa)) enclose the AB hydrolase-1 domain. Residue Ser151 is the Nucleophile of the active site. Position 221 (Arg221) interacts with substrate. Active-site residues include Asp321 and His354. Asp355 serves as a coordination point for substrate.

The protein belongs to the AB hydrolase superfamily. MetX family. Homodimer.

Its subcellular location is the cytoplasm. It carries out the reaction L-homoserine + succinyl-CoA = O-succinyl-L-homoserine + CoA. It functions in the pathway amino-acid biosynthesis; L-methionine biosynthesis via de novo pathway; O-succinyl-L-homoserine from L-homoserine: step 1/1. Transfers a succinyl group from succinyl-CoA to L-homoserine, forming succinyl-L-homoserine. The polypeptide is Homoserine O-succinyltransferase (Paraburkholderia phytofirmans (strain DSM 17436 / LMG 22146 / PsJN) (Burkholderia phytofirmans)).